The sequence spans 139 residues: Large ribosomal subunit protein mL42 (139 aa).

The transit peptide at M1–H32 directs the protein to the mitochondrion.

This sequence belongs to the mitochondrion-specific ribosomal protein mL42 family. As to quaternary structure, component of the mitochondrial ribosome large subunit (39S) which comprises a 16S rRNA and about 50 distinct proteins. Component of the mitochondrial ribosome small subunit (28S) which comprises a 12S rRNA and about 30 distinct proteins.

The protein localises to the mitochondrion. This is Large ribosomal subunit protein mL42 (MRPL42) from Pongo abelii (Sumatran orangutan).